The following is a 113-amino-acid chain: TYRO protein tyrosine kinase-binding protein (113 aa).

The first 21 residues, 1–21, serve as a signal peptide directing secretion; sequence MGGLEPCSRLLLLPLLLAVSG. Topologically, residues 22 to 40 are extracellular; the sequence is LRPVQAQAQSDCSCSTVSP. Residues 41 to 61 form a helical membrane-spanning segment; that stretch reads GVLAGIVMGDLVLTVLIALAV. Residue Asp50 participates in Ca(2+) binding. The Cytoplasmic segment spans residues 62-113; the sequence is YFLGRLVPRGRGAAEAATRKQRITETESPYQELQGQRSDVYSDLNTQRPYYK. Residues 75–113 form a disordered region; it reads AEAATRKQRITETESPYQELQGQRSDVYSDLNTQRPYYK. The ITAM domain occupies 80–108; that stretch reads RKQRITETESPYQELQGQRSDVYSDLNTQ. Positions 87–113 are enriched in polar residues; that stretch reads TESPYQELQGQRSDVYSDLNTQRPYYK. 2 positions are modified to phosphotyrosine: Tyr91 and Tyr102.

The protein belongs to the TYROBP family. As to quaternary structure, homodimer; disulfide-linked. Homotrimer; disulfide-linked. Homotetramer; disulfide-linked. Homotrimers and homotetramers form when low levels of partner receptors are available and are competitive with assembly with interacting receptors. They may represent alternative oligomerization states or may be intermediates in the receptor assembly process. Binding of a metal cation aids in homooligomerization through coordination of the metal ion by the subunits of the oligomer. Interacts with TREM1. Interacts with TREM2. Interacts with SIRPB1. Interacts with CLECSF5. Interacts with SIGLEC14. Interacts with CD300LB and CD300E. Interacts with CD300C2. Interacts (via ITAM domain) with SYK (via SH2 domains); activates SYK mediating neutrophil and macrophage integrin-mediated activation. Interacts with KLRC2, KIR2DS3 and KIR2DS5. Interacts with CD300H. Interacts with KIR2DS1. Interacts with KLRD1. Interacts with SIGLEC1. Post-translationally, following ligand binding by associated receptors, tyrosine phosphorylated in the ITAM domain which leads to activation of additional tyrosine kinases and subsequent cell activation. As to expression, expressed at low levels in the early development of the hematopoietic system and in the promonocytic stage and at high levels in mature monocytes. Expressed in hematological cells and tissues such as peripheral blood leukocytes and spleen. Also found in bone marrow, lymph nodes, placenta, lung and liver. Expressed at lower levels in different parts of the brain especially in the basal ganglia and corpus callosum.

The protein resides in the cell membrane. In terms of biological role, adapter protein which non-covalently associates with activating receptors found on the surface of a variety of immune cells to mediate signaling and cell activation following ligand binding by the receptors. TYROBP is tyrosine-phosphorylated in the ITAM domain following ligand binding by the associated receptors which leads to activation of additional tyrosine kinases and subsequent cell activation. Also has an inhibitory role in some cells. Non-covalently associates with activating receptors of the CD300 family to mediate cell activation. Also mediates cell activation through association with activating receptors of the CD200R family. Required for neutrophil activation mediated by integrin. Required for the activation of myeloid cells mediated by the CLEC5A/MDL1 receptor. Associates with natural killer (NK) cell receptors such as KIR2DS2 and the KLRD1/KLRC2 heterodimer to mediate NK cell activation. Also enhances trafficking and cell surface expression of NK cell receptors KIR2DS1, KIR2DS2 and KIR2DS4 and ensures their stability at the cell surface. Associates with SIRPB1 to mediate activation of myeloid cells such as monocytes and dendritic cells. Associates with TREM1 to mediate activation of neutrophils and monocytes. Associates with TREM2 on monocyte-derived dendritic cells to mediate up-regulation of chemokine receptor CCR7 and dendritic cell maturation and survival. Association with TREM2 mediates cytokine-induced formation of multinucleated giant cells which are formed by the fusion of macrophages. Stabilizes the TREM2 C-terminal fragment (TREM2-CTF) produced by TREM2 ectodomain shedding which suppresses the release of pro-inflammatory cytokines. In microglia, required with TREM2 for phagocytosis of apoptotic neurons. Required with ITGAM/CD11B in microglia to control production of microglial superoxide ions which promote the neuronal apoptosis that occurs during brain development. Promotes pro-inflammatory responses in microglia following nerve injury which accelerates degeneration of injured neurons. Positively regulates the expression of the IRAK3/IRAK-M kinase and IL10 production by liver dendritic cells and inhibits their T cell allostimulatory ability. Negatively regulates B cell proliferation. Required for CSF1-mediated osteoclast cytoskeletal organization. Positively regulates multinucleation during osteoclast development. The protein is TYRO protein tyrosine kinase-binding protein of Homo sapiens (Human).